The following is a 586-amino-acid chain: MSAGDAVCTGWLVKSPPERKLQRYAWRKRWFVLRRGRMSGNPDVLEYYRNKHSSKPIRVIDLSECAVWKHVGPSFVRKEFQNNFVFIVKTTSRTFYLVAKTEQEMQVWVHSISQVCNLGHLEDGADSMESLSYTPSSLQPSSASSLLTAHAASSSLPRDDPNTNAVATEETRSESELLFLPDYLVLSNCETGRLHHTSLPTRCDSWSNSDRSLEQASFDDVFVDCLQPLPSSHLVHPSCHGSGAQEVPSSRPQAALIWSREINGPPRDHLSSSPLLESSLSSTIQVDKNQGSLPCGAKELDIMSNTPPPRPPKPSHLSERRQEEWSTHSGSKKPECTLVPRRISLSGLDNMRTWKADVEGQSLRHRDKRLSLNLPCRFSPMYPTASASIEDSYVPMSPQAGASGLGPHCSPDDYIPMNSGSISSPLPELPANLEPPPVNRDLKPQRKSRPPPLDLRNLSIIREHASLTRTRTVPCSRTSFLSPERNGINSARFFANPVSREDEESYIEMEEHRTASSLSSGALTWTKKFSLDYLALDFNSASPAPMQQKLLLSEEQRVDYVQVDEQKTQALQSTKQEWTDERQSKV.

The 113-residue stretch at aspartate 5 to asparagine 117 folds into the PH domain. 2 disordered regions span residues alanine 149–threonine 171 and serine 281–glutamate 335. Residues threonine 283–serine 292 are compositionally biased toward polar residues. The segment covering histidine 316–serine 326 has biased composition (basic and acidic residues). Serine 344 carries the post-translational modification Phosphoserine. A disordered region spans residues glycine 401–leucine 453. Serine 482 is modified (phosphoserine).

This sequence belongs to the GAB family. Interacts with PIK3R/p85, SHP2 and GRAP2/MONA. May interact with Grb2. Post-translationally, phosphorylated on tyrosine residue(s) after macrophage colony-stimulating factor (M-CSF) receptor stimulation.

This chain is GRB2-associated-binding protein 3 (GAB3), found in Homo sapiens (Human).